The following is a 745-amino-acid chain: GELGQTDRFFVRIINTTVSEAAHTLTSEKEERIVTAVFGIVSEDMLDTPNTTFIDPLRLSPRLNKFRRNVIHLSPTLEQQLFVLASHLQSIGSSKALAVICSEESNDIGDAVRRTLAEFDVPLESVRTRMDGEALDGYLPAGGDVFVIGLSVADVEVIAKKLEKHSALRVIVLFSDVALLYDVFSVAFNGTTGCERLVFATNLPHWSDATPSSVTVQRFHTALSDPKMWTPLSLLAFATGRLMQSILPRMEKVGSDTLANFFYADSSVVVDGMRYGVFDDIECKPAGSDLEVCASNYGATQISVRSMSRTFNASIALLAEPMTPSMRFRDPNEGALTRAQLIGVVVGTIFAVLLLLALGIVLCVALRNTRDNDSAPKEFTDPVTLIFTDIESSTALWAAHPGMMADAVATHHRLIRSLIALYGAYEVKTVGDSFMIACRSAFAAVELARDLQLTLVHHDWGTVAIDESYRKFEEERAVEDSDYAPPTARLDSAVYCKLWNGLRVRAGIHTGLCDIAHDEVTKGYDYYGRTPNLAARTESAANGGQVLVTGATYYSLSVAERARLDATPIGPVPLRGVPEPVEMYQLNAVSGRTFAALRLDRKVDLINDESDATDGVYSECGSTHGELSHSAQTIMMVLCALIGTFTAPQREKLLIPFCERWRVSLPRKTGTAWDENYSREVVRCIALKVGHVINFDSSAYDFDDLPVSMRRQSSFIVLSHQLMESIQETTQQGPSGSDEVARTCV.

Topologically, residues 1-341 (GELGQTDRFF…NEGALTRAQL (341 aa)) are extracellular. Asn-15, Asn-50, Asn-189, and Asn-312 each carry an N-linked (GlcNAc...) asparagine glycan. A helical transmembrane segment spans residues 342–362 (IGVVVGTIFAVLLLLALGIVL). At 363 to 745 (CVALRNTRDN…GSDEVARTCV (383 aa)) the chain is on the cytoplasmic side. Residues 384-538 (TLIFTDIESS…RTPNLAARTE (155 aa)) enclose the Guanylate cyclase domain. Mg(2+)-binding residues include Asp-389 and Asp-432.

It belongs to the adenylyl cyclase class-3 family. Requires Mg(2+) as cofactor.

The protein resides in the cell membrane. It catalyses the reaction ATP = 3',5'-cyclic AMP + diphosphate. Functionally, could act as a receptor for an unknown ligand. This Trypanosoma congolense protein is Receptor-type adenylate cyclase.